The following is a 146-amino-acid chain: Transcriptional regulator MraZ (146 aa).

SpoVT-AbrB domains follow at residues 9–55 (TSAL…PRPV) and 81–124 (AMDV…DAQR).

This sequence belongs to the MraZ family. In terms of assembly, forms oligomers.

Its subcellular location is the cytoplasm. The protein localises to the nucleoid. The chain is Transcriptional regulator MraZ from Leptothrix cholodnii (strain ATCC 51168 / LMG 8142 / SP-6) (Leptothrix discophora (strain SP-6)).